The chain runs to 500 residues: Amino-acid acetyltransferase, mitochondrial (500 aa).

The transit peptide at 1 to 19 (MQKPSLSQDLIWILKSVQS) directs the protein to the mitochondrion. Positions 336-496 (FLGPKCLTDG…YMSVIDKIQP (161 aa)) constitute an N-acetyltransferase domain.

This sequence belongs to the acetyltransferase family.

The protein resides in the mitochondrion. The enzyme catalyses L-glutamate + acetyl-CoA = N-acetyl-L-glutamate + CoA + H(+). It functions in the pathway amino-acid biosynthesis; L-arginine biosynthesis; N(2)-acetyl-L-ornithine from L-glutamate: step 1/4. N-acetylglutamate synthase involved in arginine biosynthesis. This is Amino-acid acetyltransferase, mitochondrial (arg6) from Schizosaccharomyces pombe (strain 972 / ATCC 24843) (Fission yeast).